The chain runs to 100 residues: Integration host factor subunit alpha (100 aa).

Belongs to the bacterial histone-like protein family. Heterodimer of an alpha and a beta chain.

Functionally, this protein is one of the two subunits of integration host factor, a specific DNA-binding protein that functions in genetic recombination as well as in transcriptional and translational control. This is Integration host factor subunit alpha (ihfA) from Zymomonas mobilis subsp. mobilis (strain ATCC 31821 / ZM4 / CP4).